We begin with the raw amino-acid sequence, 372 residues long: Envelope phospholipase OPG057 (372 aa).

Positions 153 to 156 (YPPL) match the YPPL motif. Residues Cys185 and Cys186 are each lipidated (S-palmitoyl cysteine; by host). The 28-residue stretch at 307 to 334 (FTIQNNTKLLIVDDEYVHITSANFDGTH) folds into the PLD phosphodiesterase domain.

This sequence belongs to the orthopoxvirus OPG057 family. Interacts with protein OPG190. Post-translationally, palmitoylated. Attachment of the palmitate moiety is essential for correct intracellular targeting and protein function.

The protein localises to the virion membrane. It is found in the host Golgi apparatus. Its subcellular location is the host trans-Golgi network. It localises to the host endoplasmic reticulum membrane. It carries out the reaction a 1,2-diacyl-sn-glycero-3-phosphocholine + H2O = a 1,2-diacyl-sn-glycero-3-phosphate + choline + H(+). Its function is as follows. Major envelope protein that plays a role in the biogenesis of the viral double membrane and in egress of virus from the host cell. Produces the wrapped form of virus that is required for cell-to-cell spread. Acts as a lipase with broad specificity including phospholipase C, phospholipase A, and triacylglycerol lipase activities. The chain is Envelope phospholipase OPG057 (OPG057) from Cynomys gunnisoni (Gunnison's prairie dog).